We begin with the raw amino-acid sequence, 463 residues long: uncharacterized protein (463 aa).

The TRAM domain occupies 9–67 (VLKKGQRFPLTIKRLGINGEGVGYFKRHVVFVPGALPGEEVVVEVTDVKPRFAEASIRK). [4Fe-4S] cluster is bound by residues Cys-80, Cys-86, Cys-89, and Cys-169. Gln-293, Tyr-322, Asp-343, and Asp-391 together coordinate S-adenosyl-L-methionine. The Nucleophile role is filled by Cys-418.

Belongs to the class I-like SAM-binding methyltransferase superfamily. RNA M5U methyltransferase family.

This is an uncharacterized protein from Halalkalibacterium halodurans (strain ATCC BAA-125 / DSM 18197 / FERM 7344 / JCM 9153 / C-125) (Bacillus halodurans).